The primary structure comprises 249 residues: Proteasome subunit alpha type-7-B (249 aa).

This sequence belongs to the peptidase T1A family. As to quaternary structure, the 26S proteasome consists of a 20S proteasome core and two 19S regulatory subunits. The 20S proteasome core is composed of 28 subunits that are arranged in four stacked rings, resulting in a barrel-shaped structure. The two end rings are each formed by seven alpha subunits, and the two central rings are each formed by seven beta subunits. The catalytic chamber with the active sites is on the inside of the barrel.

The protein localises to the cytoplasm. Its subcellular location is the nucleus. Its function is as follows. The proteasome is a multicatalytic proteinase complex which is characterized by its ability to cleave peptides with Arg, Phe, Tyr, Leu, and Glu adjacent to the leaving group at neutral or slightly basic pH. The proteasome has an ATP-dependent proteolytic activity. This is Proteasome subunit alpha type-7-B (PAD1) from Oryza sativa subsp. indica (Rice).